Here is a 301-residue protein sequence, read N- to C-terminus: Glycine--tRNA ligase alpha subunit (301 aa).

This sequence belongs to the class-II aminoacyl-tRNA synthetase family. Tetramer of two alpha and two beta subunits.

The protein resides in the cytoplasm. It carries out the reaction tRNA(Gly) + glycine + ATP = glycyl-tRNA(Gly) + AMP + diphosphate. This is Glycine--tRNA ligase alpha subunit from Alteromonas mediterranea (strain DSM 17117 / CIP 110805 / LMG 28347 / Deep ecotype).